Here is a 462-residue protein sequence, read N- to C-terminus: Protoheme IX farnesyltransferase, mitochondrial (462 aa).

A run of 7 helical transmembrane segments spans residues 152-172, 173-193, 237-257, 269-289, 296-316, 348-368, and 411-431; these read LTIL…YTVS, LPEL…ANAI, MLFL…IVLY, IINT…GWAA, PGAW…FNAL, SLLM…DWVF, and AKKL…LAML.

This sequence belongs to the UbiA prenyltransferase family.

It localises to the mitochondrion membrane. Converts protoheme IX and farnesyl diphosphate to heme O. In Debaryomyces hansenii (strain ATCC 36239 / CBS 767 / BCRC 21394 / JCM 1990 / NBRC 0083 / IGC 2968) (Yeast), this protein is Protoheme IX farnesyltransferase, mitochondrial (COX10).